We begin with the raw amino-acid sequence, 110 residues long: Large ribosomal subunit protein uL22 (110 aa).

Belongs to the universal ribosomal protein uL22 family. Part of the 50S ribosomal subunit.

Functionally, this protein binds specifically to 23S rRNA; its binding is stimulated by other ribosomal proteins, e.g. L4, L17, and L20. It is important during the early stages of 50S assembly. It makes multiple contacts with different domains of the 23S rRNA in the assembled 50S subunit and ribosome. The globular domain of the protein is located near the polypeptide exit tunnel on the outside of the subunit, while an extended beta-hairpin is found that lines the wall of the exit tunnel in the center of the 70S ribosome. In Leptospira borgpetersenii serovar Hardjo-bovis (strain JB197), this protein is Large ribosomal subunit protein uL22.